The primary structure comprises 295 residues: Cuticle collagen 3A3 (295 aa).

The segment at 81-278 is disordered; that stretch reads AITSSEENGG…GRPGEPGICP (198 aa). Pro residues-rich tracts occupy residues 97-109 and 146-160; these read PGPP…PGRP and AGPP…PPGD. 3 triple-helical region regions span residues 98-127, 147-203, and 212-277; these read GPPG…PGLP, GPPG…VGED, and GDQG…PGIC. Residues 172 to 182 are compositionally biased toward low complexity; that stretch reads QDGIPGQQGTK. Residues 217 to 228 are compositionally biased toward pro residues; that stretch reads PGEPGPEGPPGE. Residues 229 to 244 are compositionally biased toward low complexity; it reads PGLQGPVGMPGQVGQK. Positions 261 to 271 are enriched in pro residues; the sequence is RPGPPGPPGRP.

It belongs to the cuticular collagen family.

Its function is as follows. Nematode cuticles are composed largely of collagen-like proteins. The cuticle functions both as an exoskeleton and as a barrier to protect the worm from its environment. The sequence is that of Cuticle collagen 3A3 (3A3) from Haemonchus contortus (Barber pole worm).